We begin with the raw amino-acid sequence, 795 residues long: Histone acetyltransferase KAT2A (795 aa).

Residues M1–Q18 are compositionally biased toward polar residues. The disordered stretch occupies residues M1–R55. Over residues S19–S34 the composition is skewed to low complexity. The region spanning V461 to N614 is the N-acetyltransferase domain. E533 serves as the catalytic Proton donor/acceptor. Residues C537–V539, Q544–T550, and Y575 each bind acetyl-CoA. Succinyl-CoA is bound by residues C537–V539, Q544–T550, and Y575. The interval L597–A606 is loop 3. The 105-residue stretch at K686–A790 folds into the Bromo domain.

Belongs to the acetyltransferase family. GCN5 subfamily.

It localises to the nucleus. The protein resides in the chromosome. The protein localises to the cytoplasm. It is found in the cytoskeleton. Its subcellular location is the microtubule organizing center. It localises to the centrosome. The catalysed reaction is L-lysyl-[histone] + acetyl-CoA = N(6)-acetyl-L-lysyl-[histone] + CoA + H(+). The enzyme catalyses L-lysyl-[protein] + acetyl-CoA = N(6)-acetyl-L-lysyl-[protein] + CoA + H(+). It carries out the reaction succinyl-CoA + L-lysyl-[protein] = N(6)-succinyl-L-lysyl-[protein] + CoA + H(+). It catalyses the reaction glutaryl-CoA + L-lysyl-[protein] = N(6)-glutaryl-L-lysyl-[protein] + CoA + H(+). Its function is as follows. Protein lysine acyltransferase that can act as a acetyltransferase, glutaryltransferasesucc, succinyltransferase or malonyltransferase, depending on the context. Acts as a histone lysine succinyltransferase: catalyzes succinylation of histone H3 on 'Lys-79' (H3K79succ), with a maximum frequency around the transcription start sites of genes. Succinylation of histones gives a specific tag for epigenetic transcription activation. Association with the 2-oxoglutarate dehydrogenase complex, which provides succinyl-CoA, is required for histone succinylation. In different complexes, functions either as an acetyltransferase (HAT) or as a succinyltransferase: in the SAGA and ATAC complexes, acts as a histone acetyltransferase. Has significant histone acetyltransferase activity with core histones, but not with nucleosome core particles. Has a a strong preference for acetylation of H3 at 'Lys-9' (H3K9ac). Acetylation of histones gives a specific tag for epigenetic transcription activation. Also acetylates non-histone proteins, such as tbx5. Involved in heart and limb development by mediating acetylation of tbx5. Together with kat2b, required for growth and differentiation of craniofacial cartilage and bone by regulating acetylation of histone H3 at 'Lys-9' (H3K9ac). Also acts as a histone glutaryltransferase: catalyzes glutarylation of histone H4 on 'Lys-91' (H4K91glu), a mark that destabilizes nucleosomes by promoting dissociation of the H2A-H2B dimers from nucleosomes. The protein is Histone acetyltransferase KAT2A of Danio rerio (Zebrafish).